An 831-amino-acid polypeptide reads, in one-letter code: Intraflagellar transport protein 88 (831 aa).

11 TPR repeats span residues Ile68–Val101, Thr120–Ala153, Ala156–Ser189, Phe248–Ile281, Arg492–Asp525, Ser526–Ser559, Val560–Tyr593, Asp595–Val627, Pro632–Ser665, Leu666–Thr699, and Pro700–Asn733. Residues Arg785–Asp816 are disordered. Residues Ala805–Gly815 show a composition bias toward polar residues.

The protein localises to the cell projection. It is found in the cilium. The protein resides in the flagellum. It localises to the cytoplasm. Its subcellular location is the cytoskeleton. The protein localises to the flagellum axoneme. It is found in the flagellum basal body. Functionally, component of the intraflagellar transport complex B (IFT-B) involved in flagellar assembly. The protein is Intraflagellar transport protein 88 of Giardia intestinalis (strain ATCC 50803 / WB clone C6) (Giardia lamblia).